A 116-amino-acid polypeptide reads, in one-letter code: Iron-sulfur cluster insertion protein ErpA (116 aa).

Iron-sulfur cluster is bound by residues C44, C108, and C110.

It belongs to the HesB/IscA family. Homodimer. It depends on iron-sulfur cluster as a cofactor.

Required for insertion of 4Fe-4S clusters for at least IspG. In Francisella philomiragia subsp. philomiragia (strain ATCC 25017 / CCUG 19701 / FSC 153 / O#319-036), this protein is Iron-sulfur cluster insertion protein ErpA.